The primary structure comprises 312 residues: MSRRVATITLNPAYDLVGFCPEIERGEVNLVKTTGLHAAGKGINVAKVLKDLGIDVTVGGFLGKDNQDGFQQLFSELGIANRFQVVQGRTRINVKLTEKDGEVTDFNFSGFEVTPADWERFVTDSLSWLGQFDMVCVSGSLPSGVSPEAFTDWMTRLRSQCPCIIFDSSREALVAGLKAAPWLVKPNRRELEIWAGRKLPEMKDVIEAAHALREQGIAHVVISLGAEGALWVNASGEWIAKPPSVDVVSTVGAGDSMVGGLIYGLLMRESSEHTLRLATAVAALAVSQSNVGITDRPQLAAMMARVDLQPFN.

ATP-binding positions include 223-228 (SLGAEG) and 254-255 (GD). The active-site Proton acceptor is aspartate 255.

The protein belongs to the carbohydrate kinase PfkB family.

It carries out the reaction beta-D-fructose 1-phosphate + ATP = beta-D-fructose 1,6-bisphosphate + ADP + H(+). Functionally, catalyzes the ATP-dependent phosphorylation of fructose-l-phosphate to fructose-l,6-bisphosphate. The sequence is that of 1-phosphofructokinase (fruK) from Escherichia coli O157:H7.